The primary structure comprises 154 residues: uncharacterized protein (154 aa).

4 helical membrane passes run phenylalanine 20–glycine 42, phenylalanine 62–leucine 84, alanine 91–tyrosine 109, and isoleucine 113–methionine 132.

It is found in the cell membrane. This is an uncharacterized protein from Bacillus subtilis (strain 168).